Consider the following 353-residue polypeptide: Ribosomal RNA small subunit methyltransferase C (353 aa).

Belongs to the methyltransferase superfamily. RsmC family. In terms of assembly, monomer.

The protein resides in the cytoplasm. The enzyme catalyses guanosine(1207) in 16S rRNA + S-adenosyl-L-methionine = N(2)-methylguanosine(1207) in 16S rRNA + S-adenosyl-L-homocysteine + H(+). Functionally, specifically methylates the guanine in position 1207 of 16S rRNA in the 30S particle. The polypeptide is Ribosomal RNA small subunit methyltransferase C (Marinomonas sp. (strain MWYL1)).